A 186-amino-acid polypeptide reads, in one-letter code: uncharacterized protein (186 aa).

One can recognise a Macro domain in the interval 1 to 181; it reads MVSFSYKGNL…TFVSLASDFL (181 aa).

It belongs to the MacroD-type family.

This is an uncharacterized protein from Thermoplasma volcanium (strain ATCC 51530 / DSM 4299 / JCM 9571 / NBRC 15438 / GSS1).